Consider the following 137-residue polypeptide: NADH dehydrogenase [ubiquinone] 1 beta subcomplex subunit 7 (137 aa).

The N-myristoyl glycine moiety is linked to residue Gly-2. Positions 56 to 98 constitute a CHCH domain; that stretch reads RDYCAHYLIRLLKCKRDSFPNFXACKQERHDWDYCEHRDYVMR. The short motif at 59 to 69 is the Cx9C motif 1 element; it reads CAHYLIRLLKC. 2 cysteine pairs are disulfide-bonded: Cys-59/Cys-90 and Cys-69/Cys-80. The residue at position 73 (Ser-73) is a Phosphoserine. Residues 80–90 carry the Cx9C motif 2 motif; that stretch reads CKQERHDWDYC. Residues 113 to 137 form a disordered region; that stretch reads KRREKKAAELAKGQGPGEVDPKVAL.

It belongs to the complex I NDUFB7 subunit family. As to quaternary structure, complex I is composed of 45 different subunits.

The protein localises to the mitochondrion inner membrane. The protein resides in the mitochondrion intermembrane space. In terms of biological role, accessory subunit of the mitochondrial membrane respiratory chain NADH dehydrogenase (Complex I), that is believed not to be involved in catalysis. Complex I functions in the transfer of electrons from NADH to the respiratory chain. The immediate electron acceptor for the enzyme is believed to be ubiquinone. This chain is NADH dehydrogenase [ubiquinone] 1 beta subcomplex subunit 7 (NDUFB7), found in Pan troglodytes (Chimpanzee).